Consider the following 389-residue polypeptide: Mating-type protein MAT-1 (389 aa).

The alpha box DNA-binding region spans 70 to 127 (KAKKALNAFVGFRCYYISIPHFKSWPMKKLSNLIGLLWETDPNKSLWSLMTKAWSAIR).

It belongs to the MATALPHA1 family.

The protein resides in the nucleus. Mating type proteins are sequence specific DNA-binding proteins that act as master switches in fungal differentiation by controlling gene expression in a cell type-specific fashion. Transcriptional activator that induces the transcription of alpha-specific genes. The sequence is that of Mating-type protein MAT-1 (MAT1) from Alternaria alternata (Alternaria rot fungus).